The following is a 383-amino-acid chain: F-box/kelch-repeat protein At2g22030 (383 aa).

One can recognise an F-box domain in the interval 23-71; sequence SLLFSSLPYDVVLNCLARVSRRYYPNLSCVSKSFQSLVRSPELAHMRSL. Kelch repeat units follow at residues 130–175, 176–220, and 269–317; these read KIYF…VVNG, KLYV…LMRY, and GVCV…GMVD.

This is F-box/kelch-repeat protein At2g22030 from Arabidopsis thaliana (Mouse-ear cress).